A 212-amino-acid chain; its full sequence is MNLFRFLGDLSHLLAIILLLLKIWKSRSCAGISGKSQVLFAVVFTARYLDLFTNYISLYNTCMKVVYIACSFTTVWMIYSKFKATYDGNHDTFRVEFLVIPTAILAFLVNHDFTPLEILWTFSIYLESVAILPQLFMVSKTGEAETITSHYLFALGVYRTLYLFNWIWRYHFEGFFDLIAIVAGLVQTVLYCDFFYLYITKVLKGKKLSLPA.

The Lumenal segment spans residues 1 to 4 (MNLF). A helical transmembrane segment spans residues 5–24 (RFLGDLSHLLAIILLLLKIW). The Cytoplasmic portion of the chain corresponds to 25–32 (KSRSCAGI). A helical transmembrane segment spans residues 33 to 52 (SGKSQVLFAVVFTARYLDLF). An interaction with the K-D-E-L motif on target proteins region spans residues 47–48 (RY). Residues 53 to 58 (TNYISL) lie on the Lumenal side of the membrane. Residues 59 to 79 (YNTCMKVVYIACSFTTVWMIY) form a helical membrane-spanning segment. Residues 80–92 (SKFKATYDGNHDT) lie on the Cytoplasmic side of the membrane. The chain crosses the membrane as a helical span at residues 93–110 (FRVEFLVIPTAILAFLVN). Topologically, residues 111–116 (HDFTPL) are lumenal. Residues 117–135 (EILWTFSIYLESVAILPQL) form a helical membrane-spanning segment. Residues 136–149 (FMVSKTGEAETITS) are Cytoplasmic-facing. The chain crosses the membrane as a helical span at residues 150 to 168 (HYLFALGVYRTLYLFNWIW). The interaction with the K-D-E-L motif on target proteins stretch occupies residues 159–169 (RTLYLFNWIWR). The Lumenal portion of the chain corresponds to 169–178 (RYHFEGFFDL). The helical transmembrane segment at 179–199 (IAIVAGLVQTVLYCDFFYLYI) threads the bilayer. Over 200-212 (TKVLKGKKLSLPA) the chain is Cytoplasmic. Residues 204–207 (KGKK) form an important for recycling of cargo proteins with the sequence motif K-D-E-L from the Golgi to the endoplasmic reticulum region. S209 is subject to Phosphoserine; by PKA.

It belongs to the ERD2 family. Upon ligand binding the receptor oligomerizes and interacts with components of the transport machinery such as ARFGAP1 and ARF1. Post-translationally, phosphorylation by PKA at Ser-209 is required for endoplasmic reticulum retention function.

It is found in the golgi apparatus membrane. Its subcellular location is the cytoplasmic vesicle. It localises to the COPI-coated vesicle membrane. The protein localises to the endoplasmic reticulum membrane. The protein resides in the endoplasmic reticulum-Golgi intermediate compartment membrane. Functionally, receptor for the C-terminal sequence motif K-D-E-L that is present on endoplasmic reticulum resident proteins and that mediates their recycling from the Golgi back to the endoplasmic reticulum. In Bos taurus (Bovine), this protein is ER lumen protein-retaining receptor 1 (KDELR1).